A 329-amino-acid polypeptide reads, in one-letter code: MAKLETVTLGNIGKDGKQTLVLNPRGVNPTNGVASLSQAGAVPALEKRVTVSVSQPSRNRKNYKVQVKIQNPTACTANGSCDPSVTRQAYADVTFSFTQYSTDEERAFVRTELAALLASPLLIDAIDQLNPAYWTLLIAGGGSGSKPDPVIPDPPIDPPPGTGKYTCPFAIWSLEEVYEPPTKNRPWPIYNAVELQPREFDVALKDLLGNTKWRDWDSRLSYTTVRGCRGNGYIDLDATYLATDQAMRDQKYDIREGKKPGAFGNIERFIYLKSINAYCSLSDIAAYHADGVIVGFWRDPSSGGAIPFDFTKFDKTKCPIQAVIVVPRA.

It localises to the virion. In terms of biological role, minor capsid protein. The protein is Minor capsid protein A1 of Escherichia coli (Bacteriophage Q-beta).